A 265-amino-acid chain; its full sequence is Pyridoxine 5'-phosphate synthase (265 aa).

Asn6 provides a ligand contact to 3-amino-2-oxopropyl phosphate. 8–9 (DH) contacts 1-deoxy-D-xylulose 5-phosphate. Arg17 provides a ligand contact to 3-amino-2-oxopropyl phosphate. His42 serves as the catalytic Proton acceptor. 1-deoxy-D-xylulose 5-phosphate contacts are provided by Arg44 and His49. Glu69 acts as the Proton acceptor in catalysis. Thr99 provides a ligand contact to 1-deoxy-D-xylulose 5-phosphate. Residue His213 is the Proton donor of the active site. Residues Gly214 and 235–236 (GQ) each bind 3-amino-2-oxopropyl phosphate.

The protein belongs to the PNP synthase family. In terms of assembly, homooctamer; tetramer of dimers.

It localises to the cytoplasm. It carries out the reaction 3-amino-2-oxopropyl phosphate + 1-deoxy-D-xylulose 5-phosphate = pyridoxine 5'-phosphate + phosphate + 2 H2O + H(+). Its pathway is cofactor biosynthesis; pyridoxine 5'-phosphate biosynthesis; pyridoxine 5'-phosphate from D-erythrose 4-phosphate: step 5/5. Catalyzes the complicated ring closure reaction between the two acyclic compounds 1-deoxy-D-xylulose-5-phosphate (DXP) and 3-amino-2-oxopropyl phosphate (1-amino-acetone-3-phosphate or AAP) to form pyridoxine 5'-phosphate (PNP) and inorganic phosphate. The sequence is that of Pyridoxine 5'-phosphate synthase from Nitratiruptor sp. (strain SB155-2).